The primary structure comprises 520 residues: Basal body-orientation factor 1 (520 aa).

Residues 1–21 (MPKKKGKGKGKGKGKGKGKKD) show a composition bias toward basic residues. The interval 1–34 (MPKKKGKGKGKGKGKGKGKKDGKHDSKADRESEI) is disordered. Residues 22–34 (GKHDSKADRESEI) show a composition bias toward basic and acidic residues. Coiled coils occupy residues 27-175 (KADR…REKM) and 245-386 (VKEA…RQEA). The tract at residues 468-492 (AHPPALSASSSEKIQVSSDAGSTVE) is disordered. The segment covering 469–478 (HPPALSASSS) has biased composition (low complexity). Residues 479–492 (EKIQVSSDAGSTVE) show a composition bias toward polar residues.

It belongs to the BBOF1 family.

The protein resides in the cytoplasm. It localises to the cytoskeleton. It is found in the cilium basal body. In terms of biological role, basal body protein required in multiciliate cells to align and maintain cilia orientation in response to flow. May act by mediating a maturation step that stabilizes and aligns cilia orientation. Not required to respond to planar cell polarity (PCP) or flow-based orientation cues. This chain is Basal body-orientation factor 1, found in Danio rerio (Zebrafish).